The chain runs to 765 residues: E3 ubiquitin-protein ligase SlrP (765 aa).

The tract at residues 1-453 is interaction with target proteins; that stretch reads MFNITNIQST…YQGPRVLFAM (453 aa). LRR repeat units follow at residues 200–219, 221–242, 243–262, 263–284, 285–305, 306–325, 326–346, 347–368, 369–389, and 390–410; these read QITT…ENLQ, NIKT…LPDT, IQEM…RLPS, ALQS…LPEE, LRYL…LPSE, ITHL…TLPP, GLKT…SLPP, ELQV…LPPT, ITTL…LPAA, and LQIM…LPHF. Residues 454–461 are linker; sequence GDFSIVRV. Residues 462 to 765 are E3 ubiquitin-protein ligase catalytic domain; that stretch reads TRPLHQAVQG…VSSLMSAYWR (304 aa). Positions 464-758 constitute an NEL domain; it reads PLHQAVQGWL…NILLKKEVSS (295 aa). The active-site Glycyl thioester intermediate is Cys546.

This sequence belongs to the LRR-containing bacterial E3 ligase family. Interacts with host TXN. Post-translationally, ubiquitinated in the presence of host E1 ubiquitin-activating enzyme, E2 ubiquitin-conjugating enzyme and ubiquitin.

It localises to the secreted. The protein resides in the host cytoplasm. The catalysed reaction is S-ubiquitinyl-[E2 ubiquitin-conjugating enzyme]-L-cysteine + [acceptor protein]-L-lysine = [E2 ubiquitin-conjugating enzyme]-L-cysteine + N(6)-ubiquitinyl-[acceptor protein]-L-lysine.. Effector proteins function to alter host cell physiology and promote bacterial survival in host tissues. This protein is an E3 ubiquitin ligase that interferes with host's ubiquitination pathway. Can ubiquitinate both ubiquitin and host TXN (thioredoxin). Leads to significant decrease of thioredoxin activity and increase of host cell death. The polypeptide is E3 ubiquitin-protein ligase SlrP (slrP) (Salmonella typhimurium (strain 14028s / SGSC 2262)).